A 596-amino-acid polypeptide reads, in one-letter code: Elongation factor 4 (596 aa).

Positions Lys-2–Glu-184 constitute a tr-type G domain. GTP contacts are provided by residues Asp-14–Thr-19 and Asn-131–Asp-134.

Belongs to the TRAFAC class translation factor GTPase superfamily. Classic translation factor GTPase family. LepA subfamily.

Its subcellular location is the cell inner membrane. It carries out the reaction GTP + H2O = GDP + phosphate + H(+). In terms of biological role, required for accurate and efficient protein synthesis under certain stress conditions. May act as a fidelity factor of the translation reaction, by catalyzing a one-codon backward translocation of tRNAs on improperly translocated ribosomes. Back-translocation proceeds from a post-translocation (POST) complex to a pre-translocation (PRE) complex, thus giving elongation factor G a second chance to translocate the tRNAs correctly. Binds to ribosomes in a GTP-dependent manner. This chain is Elongation factor 4, found in Shewanella halifaxensis (strain HAW-EB4).